A 418-amino-acid chain; its full sequence is Histidine--tRNA ligase (418 aa).

This sequence belongs to the class-II aminoacyl-tRNA synthetase family. Homodimer.

It is found in the cytoplasm. It carries out the reaction tRNA(His) + L-histidine + ATP = L-histidyl-tRNA(His) + AMP + diphosphate + H(+). This chain is Histidine--tRNA ligase, found in Dehalococcoides mccartyi (strain ATCC BAA-2266 / KCTC 15142 / 195) (Dehalococcoides ethenogenes (strain 195)).